We begin with the raw amino-acid sequence, 473 residues long: MAP kinase-activated protein kinase 5 (473 aa).

A Protein kinase domain is found at 22-304; sequence INWTQKLGAG…IEGVLDHPWL (283 aa). Residues 28 to 36 and K51 each bind ATP; that span reads LGAGISGPV. S115 is subject to Phosphoserine; by PKA. D148 functions as the Proton acceptor in the catalytic mechanism. T182 carries the post-translational modification Phosphothreonine; by MAPK11, MAPK14, MAPK4, MAPK6 and PKA. Residues S212 and S354 each carry the phosphoserine modification. Positions 409 to 440 form a coiled coil; it reads ENEDEKLNEVMQEAWKYNRECKLLRDALQSFS.

The protein belongs to the protein kinase superfamily. CAMK Ser/Thr protein kinase family. Interacts with SQSTM1. Interacts with ERK3/MAPK6 and ERK4/MAPK4 (via FRIEDE motif); the interaction is direct. Interacts with YWHAE; the interaction prevents phosphorylation of HSP27/HSPB1 leading to disrupt F-actin polymerization. In terms of processing, phosphorylated on Thr-182 ERK3/MAPK6 or ERK4/MAPK4; which is the regulatory phosphorylation site and is located on the T-loop/loop 12, leading to activation. Phosphorylation at Thr-182 by p38-alpha/MAPK14, p38-beta/MAPK11 is subject to debate. Phosphorylated at Ser-115 by PKA/PRKACA, leading to localization to the cytoplasm. Autophosphorylated. As to expression, expressed ubiquitously.

It localises to the cytoplasm. The protein localises to the nucleus. It carries out the reaction L-seryl-[protein] + ATP = O-phospho-L-seryl-[protein] + ADP + H(+). The catalysed reaction is L-threonyl-[protein] + ATP = O-phospho-L-threonyl-[protein] + ADP + H(+). Activated following phosphorylation at Thr-182 by p38-alpha/MAPK14, p38-beta/MAPK11, ERK2/MAPK1, ERK3/MAPK6, and ERK4/MAPK4. Activated by stress-related extracellular stimuli; such as H(2)O(2), arsenite, anisomycin TNF alpha and also PMA and the calcium ionophore A23187; but to a lesser extent. In vitro, activated by SQSTM1. Inhibited by diterpenoid alkaloid noroxoaconitine. Its function is as follows. Tumor suppressor serine/threonine-protein kinase involved in mTORC1 signaling and post-transcriptional regulation. Phosphorylates FOXO3, ERK3/MAPK6, ERK4/MAPK4, HSP27/HSPB1, p53/TP53 and RHEB. Acts as a tumor suppressor by mediating Ras-induced senescence and phosphorylating p53/TP53. Involved in post-transcriptional regulation of MYC by mediating phosphorylation of FOXO3: phosphorylation of FOXO3 leads to promote nuclear localization of FOXO3, enabling expression of miR-34b and miR-34c, 2 post-transcriptional regulators of MYC that bind to the 3'UTR of MYC transcript and prevent MYC translation. Acts as a negative regulator of mTORC1 signaling by mediating phosphorylation and inhibition of RHEB. Part of the atypical MAPK signaling via its interaction with ERK3/MAPK6 or ERK4/MAPK4: the precise role of the complex formed with ERK3/MAPK6 or ERK4/MAPK4 is still unclear, but the complex follows a complex set of phosphorylation events: upon interaction with atypical MAPK (ERK3/MAPK6 or ERK4/MAPK4), ERK3/MAPK6 (or ERK4/MAPK4) is phosphorylated and then mediates phosphorylation and activation of MAPKAPK5, which in turn phosphorylates ERK3/MAPK6 (or ERK4/MAPK4). Mediates phosphorylation of HSP27/HSPB1 in response to PKA/PRKACA stimulation, inducing F-actin rearrangement. The chain is MAP kinase-activated protein kinase 5 (Mapkapk5) from Mus musculus (Mouse).